A 418-amino-acid polypeptide reads, in one-letter code: MSLVSNSLALIERGANEILKFDELERRLRSGRPLRIKAGFDPTAPDLHLGHTVLLNKMRQFQELGHQVIFLIGDFTGMIGDPTGKNVTRKPLSHEDVLANARTYEDQVFKVLDRTLTEVRFNSEWFGKMSAVDMIKLAAQHTVARMLERDDFAKRFVSQQPIVIHEFLYPLIQGYDSIALRADVELGGTDQKFNLLMGRALQEHHGQPPQVVLTMPLLEGLDGVAKMSKSLGNYIGIKEPPIDIVTKTMKIGDDLMWRWIELLSFKISAAEVVALREAVAKSELNPREVKLRLAHELVSRFYDNAAAEKAIAGWQAVVTGQGNNNLLPLQKINVPADGVRLVALLTKSGLAPSNSEAMRKLKERAVRVDGIVVDDAHLHFVPGFEGLIQIGKRNFAKVRLVTSSESHDFPESNGIDKS.

Positions 42–51 (PTAPDLHLGH) match the 'HIGH' region motif. The 'KMSKS' region motif lies at 226-230 (KMSKS). K229 is a binding site for ATP. The region spanning 339 to 400 (VRLVALLTKS…GKRNFAKVRL (62 aa)) is the S4 RNA-binding domain.

It belongs to the class-I aminoacyl-tRNA synthetase family. TyrS type 2 subfamily. In terms of assembly, homodimer.

Its subcellular location is the cytoplasm. It carries out the reaction tRNA(Tyr) + L-tyrosine + ATP = L-tyrosyl-tRNA(Tyr) + AMP + diphosphate + H(+). Catalyzes the attachment of tyrosine to tRNA(Tyr) in a two-step reaction: tyrosine is first activated by ATP to form Tyr-AMP and then transferred to the acceptor end of tRNA(Tyr). The protein is Tyrosine--tRNA ligase of Xylella fastidiosa (strain 9a5c).